A 791-amino-acid chain; its full sequence is Major facilitator superfamily domain-containing protein 6 (791 aa).

Residue alanine 2 is modified to N-acetylalanine. At threonine 10 the chain carries Phosphothreonine. A disordered region spans residues 22-47 (LADPFNGISREPEPPSNETPSSTETS). Residues 37 to 47 (SNETPSSTETS) show a composition bias toward low complexity. A run of 6 helical transmembrane segments spans residues 73–93 (VFYF…PVYY), 105–125 (LLVG…GVVA), 132–152 (KIVL…IGFV), 286–306 (AIFL…ASSV), 335–355 (WGLA…EVLI), and 369–389 (QIVF…ATQF). The disordered stretch occupies residues 407-427 (EIPQVERNNSTESSEETPTTT). Positions 416-427 (STESSEETPTTT) are enriched in low complexity. A run of 6 helical transmembrane segments spans residues 450-470 (VLFV…FLYW), 479-499 (TTLF…AYFF), 507-527 (IGHI…YIYI), 544-564 (GVTH…AVPP), 579-599 (LGLG…YFGA), and 605-625 (GIGM…WLAV). 2 disordered regions span residues 662–687 (MPRI…NKPA) and 723–791 (LQGT…AGGH). The segment covering 750 to 768 (SRNQPSPDAAASQTQTSPA) has biased composition (polar residues). Positions 782-791 (QQAQLAAGGH) are enriched in low complexity.

This sequence belongs to the major facilitator superfamily. MFSD6 family. In terms of assembly, may interact with HLA-B62. Widely expressed. Expression levels in peripheral blood mononuclear cells are highly variable between individuals, including no expression at all.

The protein resides in the membrane. The protein is Major facilitator superfamily domain-containing protein 6 (MFSD6) of Homo sapiens (Human).